The chain runs to 628 residues: FAD-linked oxidoreductase easE (628 aa).

The signal sequence occupies residues 1–20 (MSHRILCVAFCVCSLVAVSS). The 185-residue stretch at 144–328 (HQGRIPLYSA…TRATMRVHLN (185 aa)) folds into the FAD-binding PCMH-type domain. The residue at position 182 (His-182) is a Pros-8alpha-FAD histidine. 3 N-linked (GlcNAc...) asparagine glycosylation sites follow: Asn-343, Asn-382, and Asn-487.

The protein belongs to the oxygen-dependent FAD-linked oxidoreductase family. FAD serves as cofactor.

It functions in the pathway alkaloid biosynthesis; ergot alkaloid biosynthesis. FAD binding oxidoreductase; part of the gene cluster that mediates the biosynthesis of fumiclavanine C, a fungal ergot alkaloid. DmaW catalyzes the first step of ergot alkaloid biosynthesis by condensing dimethylallyl diphosphate (DMAP) and tryptophan to form 4-dimethylallyl-L-tryptophan. The second step is catalyzed by the methyltransferase easF that methylates 4-dimethylallyl-L-tryptophan in the presence of S-adenosyl-L-methionine, resulting in the formation of 4-dimethylallyl-L-abrine. The catalase easC and the FAD-dependent oxidoreductase easE then transform 4-dimethylallyl-L-abrine to chanoclavine-I which is further oxidized by EasD in the presence of NAD(+), resulting in the formation of chanoclavine-I aldehyde. EasA reduces chanoclavine-I aldehyde to dihydrochanoclavine-I aldehyde that spontaneously dehydrates to form 6,8-dimethyl-6,7-didehydroergoline. EasG then catalyzes the reduction of 6,8-dimethyl-6,7-didehydroergoline to form festuclavine. Hydrolysis of festuclavine by easM then leads to the formation of fumigaclavine B which is in turn acetylated by easN to fumigaclavine A. Finally, easL catalyzes the conversion of fumigaclavine A into fumigaclavine C by attaching a dimethylallyl moiety to C-2 of the indole nucleus. The sequence is that of FAD-linked oxidoreductase easE from Aspergillus fumigatus (strain ATCC MYA-4609 / CBS 101355 / FGSC A1100 / Af293) (Neosartorya fumigata).